The following is a 296-amino-acid chain: Acetylglutamate kinase (296 aa).

Substrate-binding positions include 68-69, R90, and N195; that span reads GG.

This sequence belongs to the acetylglutamate kinase family. ArgB subfamily.

It localises to the cytoplasm. It carries out the reaction N-acetyl-L-glutamate + ATP = N-acetyl-L-glutamyl 5-phosphate + ADP. It functions in the pathway amino-acid biosynthesis; L-arginine biosynthesis; N(2)-acetyl-L-ornithine from L-glutamate: step 2/4. Catalyzes the ATP-dependent phosphorylation of N-acetyl-L-glutamate. The chain is Acetylglutamate kinase from Desulfotalea psychrophila (strain LSv54 / DSM 12343).